Reading from the N-terminus, the 195-residue chain is Obelin (195 aa).

Positions 1–6 (MSSKYA) are excised as a propeptide. 4 EF-hand domains span residues 17-52 (RWIKRHKHMFDFLDINGNGKITLDEIVSKASDDICA), 53-88 (KLEATPEQTKRHQVCVEAFFRGCGMEYGKEIAFPQF), 110-145 (LIREWGDAVFDIFDKDGSGTITLDEWKAYGKISGIS), and 146-181 (PSQEDCEATFRHCDLDNSGDLDVDEMTRQHLGFWYT). Positions 30, 32, 34, 36, and 41 each coordinate Ca(2+). 10 residues coordinate Ca(2+): Asp-123, Asp-125, Ser-127, Thr-129, Glu-134, Asp-159, Asp-161, Ser-163, Asp-165, and Glu-170.

The protein belongs to the aequorin family.

Its function is as follows. Ca(2+)-dependent bioluminescence photoprotein. Displays an emission peak at 470 nm (blue light). Trace amounts of calcium ion trigger the intramolecular oxidation of the chromophore, coelenterazine into coelenteramide and CO(2) with the concomitant emission of light. This is Obelin from Obelia longissima (Black sea hydrozoan).